The sequence spans 350 residues: RING finger protein 44 (350 aa).

The RING-type; atypical zinc-finger motif lies at 298 to 339; that stretch reads CVVCFSDFEVRQLLRVLPCNHEFHAKCVDKWLKANRTCPICR.

The chain is RING finger protein 44 (Rnf44) from Rattus norvegicus (Rat).